We begin with the raw amino-acid sequence, 146 residues long: Large ribosomal subunit protein uL15 (146 aa).

Basic and acidic residues predominate over residues 1-13; it reads MKLHELKPAEGSR. The segment at 1 to 52 is disordered; that stretch reads MKLHELKPAEGSRKVRNRVGRGIGSGNGKTAGKGHKGQNARSGGGVRLGFEG. 2 stretches are compositionally biased toward gly residues: residues 21–31 and 42–52; these read RGIGSGNGKTA and SGGGVRLGFEG.

The protein belongs to the universal ribosomal protein uL15 family. In terms of assembly, part of the 50S ribosomal subunit.

Binds to the 23S rRNA. The protein is Large ribosomal subunit protein uL15 of Bacillus cereus (strain B4264).